A 666-amino-acid chain; its full sequence is Transmembrane protein 201 (666 aa).

Met-1 is subject to N-acetylmethionine. The Nuclear segment spans residues 1–213 (MEGVSALLAR…FSSAVKSPVQ (213 aa)). The helical transmembrane segment at 214-234 (VILLRALAFLACAFLLTTALY) threads the bilayer. Over 235-297 (GASGHFAPGT…EAWAFGQSHQ (63 aa)) the chain is Perinuclear space. Residues 298–318 (TGVVALGLLTCLLAMLLAGRI) traverse the membrane as a helical segment. At 319-322 (RLRR) the chain is on the nuclear side. Residues 323-343 (IDAFCTCLWALLLGLHLAEQH) traverse the membrane as a helical segment. Topologically, residues 344–356 (LQAASPSWLDTLK) are perinuclear space. The chain crosses the membrane as a helical span at residues 357-374 (FSTTSLCCLVGFTAAVAT). The Nuclear segment spans residues 375-644 (RKATGPRRFR…GRFGPSLVRG (270 aa)). A phosphoserine mark is found at Ser-441, Ser-444, Ser-450, Ser-454, Ser-466, Ser-477, and Ser-480. A disordered region spans residues 502–581 (PLPSPAPSVA…PPHVPRKPPL (80 aa)). A compositionally biased stretch (low complexity) spans 508-520 (PSVAGSVASSSGS). At Ser-529 the chain carries Phosphoserine. A helical transmembrane segment spans residues 645 to 665 (LLAVSLAANALFTSVFLYQSL). Residue Arg-666 is a topological domain, perinuclear space.

It belongs to the TMEM201 family. Interacts with SUN2 and LMNA. May bind to Ran GTPase; has a greater affinity for Ran-GTP over Ran-GDP. In terms of assembly, interacts with EMD.

It localises to the nucleus inner membrane. It is found in the cytoplasm. The protein resides in the cytoskeleton. Its subcellular location is the spindle pole. Functionally, critical regulator of angiogenesis and endothelial cell (EC) migration. Promotes the migration of endothelial cells, which is essential for angiogenesis. Interacts with the linker of nucleoskeleton and cytoskeleton (LINC) complex, which plays a vital role in connecting the cell's cytoskeleton to the nuclear envelope. This interaction is essential for maintaining cellular structure and facilitating the movement of endothelial cells, which is critical for proper vascular development. Involved in nuclear movement during fibroblast polarization and migration. Overexpression can recruit Ran GTPase to the nuclear periphery. Its function is as follows. May define a distinct membrane domain in the vicinity of the mitotic spindle. Involved in the organization of the nuclear envelope implicating EMD, SUN1 and A-type lamina. This is Transmembrane protein 201 (TMEM201) from Homo sapiens (Human).